A 175-amino-acid chain; its full sequence is Peptide deformylase (175 aa).

Residues Cys92 and His134 each contribute to the Fe cation site. Glu135 is an active-site residue. His138 contributes to the Fe cation binding site.

Belongs to the polypeptide deformylase family. Fe(2+) serves as cofactor.

It carries out the reaction N-terminal N-formyl-L-methionyl-[peptide] + H2O = N-terminal L-methionyl-[peptide] + formate. Functionally, removes the formyl group from the N-terminal Met of newly synthesized proteins. Requires at least a dipeptide for an efficient rate of reaction. N-terminal L-methionine is a prerequisite for activity but the enzyme has broad specificity at other positions. This is Peptide deformylase from Blochmanniella floridana.